A 704-amino-acid polypeptide reads, in one-letter code: Polyribonucleotide nucleotidyltransferase (704 aa).

2 residues coordinate Mg(2+): aspartate 491 and aspartate 497. One can recognise a KH domain in the interval 558–617; it reads PNYAVIEINSDKIRDVIGKGGATIRQLTEDTGAVIDIDDNGTIRIFGENKAATKEAIRQI. In terms of domain architecture, S1 motif spans 627 to 695; it reads GKVYKGTVAR…NRGRIKLTMK (69 aa).

It belongs to the polyribonucleotide nucleotidyltransferase family. Component of the RNA degradosome, which is a multiprotein complex involved in RNA processing and mRNA degradation. The cofactor is Mg(2+).

It localises to the cytoplasm. It catalyses the reaction RNA(n+1) + phosphate = RNA(n) + a ribonucleoside 5'-diphosphate. Its function is as follows. Involved in mRNA degradation. Catalyzes the phosphorolysis of single-stranded polyribonucleotides processively in the 3'- to 5'-direction. This Psychrobacter sp. (strain PRwf-1) protein is Polyribonucleotide nucleotidyltransferase.